The sequence spans 73 residues: Disintegrin lachesin (73 aa).

A Disintegrin domain is found at 1 to 73 (EAGEECDCGA…ADCPRNGYYG (73 aa)). 6 cysteine pairs are disulfide-bonded: Cys-6/Cys-21, Cys-8/Cys-16, Cys-15/Cys-38, Cys-29/Cys-35, Cys-34/Cys-59, and Cys-47/Cys-66. The Cell attachment site motif lies at 51–53 (RGD). The segment at 51 to 73 (RGDNPDDRCTGQSADCPRNGYYG) is disordered.

The protein belongs to the venom metalloproteinase (M12B) family. P-II subfamily. P-IIa sub-subfamily. In terms of assembly, monomer (disintegrin). In terms of tissue distribution, expressed by the venom gland.

It localises to the secreted. Inhibits fibrinogen interaction with platelets. Acts by binding to alpha-IIb/beta-3 (ITGA2B/ITGB3) on the platelet surface and inhibits aggregation induced by ADP, thrombin, platelet-activating factor and collagen. This Lachesis muta muta (Bushmaster) protein is Disintegrin lachesin.